A 328-amino-acid polypeptide reads, in one-letter code: Beta-ketoacyl-[acyl-carrier-protein] synthase III (328 aa).

Residues cysteine 113 and histidine 253 contribute to the active site. The interval 254–258 (QANLR) is ACP-binding. Asparagine 283 is a catalytic residue.

This sequence belongs to the thiolase-like superfamily. FabH family. Homodimer.

The protein resides in the cytoplasm. It carries out the reaction malonyl-[ACP] + acetyl-CoA + H(+) = 3-oxobutanoyl-[ACP] + CO2 + CoA. It participates in lipid metabolism; fatty acid biosynthesis. In terms of biological role, catalyzes the condensation reaction of fatty acid synthesis by the addition to an acyl acceptor of two carbons from malonyl-ACP. Catalyzes the first condensation reaction which initiates fatty acid synthesis and may therefore play a role in governing the total rate of fatty acid production. Possesses both acetoacetyl-ACP synthase and acetyl transacylase activities. Its substrate specificity determines the biosynthesis of branched-chain and/or straight-chain of fatty acids. The chain is Beta-ketoacyl-[acyl-carrier-protein] synthase III from Fusobacterium nucleatum subsp. nucleatum (strain ATCC 25586 / DSM 15643 / BCRC 10681 / CIP 101130 / JCM 8532 / KCTC 2640 / LMG 13131 / VPI 4355).